Consider the following 930-residue polypeptide: Protein translocase subunit SecA (930 aa).

Residues glutamine 87, 105–109 (GEGKT), and aspartate 515 each bind ATP. 4 residues coordinate Zn(2+): cysteine 914, cysteine 916, cysteine 925, and histidine 926.

It belongs to the SecA family. Monomer and homodimer. Part of the essential Sec protein translocation apparatus which comprises SecA, SecYEG and auxiliary proteins SecDF-YajC and YidC. The cofactor is Zn(2+).

It localises to the cell inner membrane. It is found in the cytoplasm. It catalyses the reaction ATP + H2O + cellular proteinSide 1 = ADP + phosphate + cellular proteinSide 2.. In terms of biological role, part of the Sec protein translocase complex. Interacts with the SecYEG preprotein conducting channel. Has a central role in coupling the hydrolysis of ATP to the transfer of proteins into and across the cell membrane, serving both as a receptor for the preprotein-SecB complex and as an ATP-driven molecular motor driving the stepwise translocation of polypeptide chains across the membrane. This Cupriavidus metallidurans (strain ATCC 43123 / DSM 2839 / NBRC 102507 / CH34) (Ralstonia metallidurans) protein is Protein translocase subunit SecA.